A 320-amino-acid polypeptide reads, in one-letter code: Iminosuccinate reductase (320 aa).

Residue Lys-67 is the Proton donor/acceptor of the active site. NAD(+) contacts are provided by residues Arg-110, 137–138, Asn-159, Ser-199, 219–222, Lys-226, and Gly-291; these read HQ and MGTD.

This sequence belongs to the ornithine cyclodeaminase/mu-crystallin family. BhcD subfamily.

It catalyses the reaction L-aspartate + NAD(+) = iminosuccinate + NADH + H(+). Imine reductase that catalyzes the NADH-dependent reduction of iminosuccinate to L-aspartate. Is essential for the growth of P.denitrificans in the presence of glycolate and glyoxylate since it functions in glyoxylate assimilation via the beta-hydroxyaspartate cycle (BHAC). Thereby BhcD regenerates the amino group donor for the first step of the BHAC. The chain is Iminosuccinate reductase from Paracoccus denitrificans (strain Pd 1222).